We begin with the raw amino-acid sequence, 472 residues long: Divalent metal cation transporter MntH (472 aa).

11 consecutive transmembrane segments (helical) span residues 59 to 79 (LLAF…PGNW), 92 to 112 (MLLS…ALAA), 144 to 164 (LAII…LNLL), 167 to 187 (VPII…LLLM), 196 to 216 (AFVI…IVLA), 233 to 253 (VVAD…TVMP), 288 to 308 (LALM…AAVF), 325 to 345 (LLAP…ALLA), 377 to 397 (VLTR…YGEQ), 402 to 422 (LLLL…IPLL), and 439 to 459 (WLMV…VKLL).

The protein belongs to the NRAMP family.

It localises to the cell inner membrane. H(+)-stimulated, divalent metal cation uptake system. This Xylella fastidiosa (strain Temecula1 / ATCC 700964) protein is Divalent metal cation transporter MntH.